A 258-amino-acid polypeptide reads, in one-letter code: Phosphate import ATP-binding protein PstB (258 aa).

The region spanning 5–247 (IDVSGLTAYY…ERIFSNPSVQ (243 aa)) is the ABC transporter domain. Position 37–44 (37–44 (GPSGCGKS)) interacts with ATP.

Belongs to the ABC transporter superfamily. Phosphate importer (TC 3.A.1.7) family. As to quaternary structure, the complex is composed of two ATP-binding proteins (PstB), two transmembrane proteins (PstC and PstA) and a solute-binding protein (PstS).

It localises to the cell membrane. The catalysed reaction is phosphate(out) + ATP + H2O = ADP + 2 phosphate(in) + H(+). Its function is as follows. Part of the ABC transporter complex PstSACB involved in phosphate import. Responsible for energy coupling to the transport system. This Streptomyces avermitilis (strain ATCC 31267 / DSM 46492 / JCM 5070 / NBRC 14893 / NCIMB 12804 / NRRL 8165 / MA-4680) protein is Phosphate import ATP-binding protein PstB.